Reading from the N-terminus, the 245-residue chain is uncharacterized protein (245 aa).

The region spanning 29–96 is the HTH gntR-type domain; it reads RSLIEATFQR…AQRGFHVTPM (68 aa). Residues 56-75 constitute a DNA-binding region (H-T-H motif); sequence IEDLKSRYEVSGGTVREALS.

This is an uncharacterized protein from Paraburkholderia xenovorans (strain LB400).